The chain runs to 86 residues: Small ribosomal subunit protein bS16 (86 aa).

This sequence belongs to the bacterial ribosomal protein bS16 family.

The chain is Small ribosomal subunit protein bS16 from Syntrophotalea carbinolica (strain DSM 2380 / NBRC 103641 / GraBd1) (Pelobacter carbinolicus).